Consider the following 100-residue polypeptide: Urease subunit gamma (100 aa).

Belongs to the urease gamma subunit family. As to quaternary structure, heterotrimer of UreA (gamma), UreB (beta) and UreC (alpha) subunits. Three heterotrimers associate to form the active enzyme. Although not discussed in the published references, Met-1 is represented in the submitted PDB entries as being modified by either a formyl, a carboxyl, or an acetyl group. The N-terminal is probably N-(dihydroxymethyl)methionine, the hydrated form of N-formylmethionine.

Its subcellular location is the cytoplasm. It catalyses the reaction urea + 2 H2O + H(+) = hydrogencarbonate + 2 NH4(+). Its pathway is nitrogen metabolism; urea degradation; CO(2) and NH(3) from urea (urease route): step 1/1. The protein is Urease subunit gamma of Sporosarcina pasteurii (Bacillus pasteurii).